Here is a 298-residue protein sequence, read N- to C-terminus: 1D-myo-inositol 2-acetamido-2-deoxy-alpha-D-glucopyranoside deacetylase (298 aa).

Residues His14, Asp17, and His148 each coordinate Zn(2+). The tract at residues 277-298 is disordered; it reads RGPAGPDGREHDLFAGLDGPAT.

It belongs to the MshB deacetylase family. Zn(2+) is required as a cofactor.

The catalysed reaction is 1D-myo-inositol 2-acetamido-2-deoxy-alpha-D-glucopyranoside + H2O = 1D-myo-inositol 2-amino-2-deoxy-alpha-D-glucopyranoside + acetate. Functionally, catalyzes the deacetylation of 1D-myo-inositol 2-acetamido-2-deoxy-alpha-D-glucopyranoside (GlcNAc-Ins) in the mycothiol biosynthesis pathway. This Nocardia farcinica (strain IFM 10152) protein is 1D-myo-inositol 2-acetamido-2-deoxy-alpha-D-glucopyranoside deacetylase.